A 548-amino-acid chain; its full sequence is uncharacterized protein (548 aa).

A DhaL domain is found at 8–200; sequence KLFADMIIQG…LLCVYEGFLK (193 aa).

This is an uncharacterized protein from Staphylococcus aureus (strain NCTC 8325 / PS 47).